A 317-amino-acid polypeptide reads, in one-letter code: MTPAPKSSFVLAHRHLLGIEGLSAADITGLLDLSEEYVELNRQIDKKRTSLRGRTQVNLFFEASTRTQSSFEIAGKRLGADVMNMSVSSSSMRKGETLIDTAVTLNAMHPDLLVVRHHASGAVELLARKVDGSVVNAGDGAHEHPTQALLDALTIRRNKGRLEGLTIAICGDVMHSRVARSNILLLNIMGARVRVVAPSTLLPPGIERMGVEVARDMREGLNGADIVMMLRLQRERMNGSFVPSSQEYFQYFGLDQKKLGYAKPDALVMHPGPMNRGVEIDSIVADGAQSLIREQVEMGVAVRMAVLEALARNLPNA.

The carbamoyl phosphate site is built by Arg-66 and Thr-67. Residue Lys-94 coordinates L-aspartate. 3 residues coordinate carbamoyl phosphate: Arg-116, His-144, and Gln-147. L-aspartate contacts are provided by Arg-177 and Arg-231. 2 residues coordinate carbamoyl phosphate: Gly-272 and Pro-273.

It belongs to the aspartate/ornithine carbamoyltransferase superfamily. ATCase family. Heterododecamer (2C3:3R2) of six catalytic PyrB chains organized as two trimers (C3), and six regulatory PyrI chains organized as three dimers (R2).

The enzyme catalyses carbamoyl phosphate + L-aspartate = N-carbamoyl-L-aspartate + phosphate + H(+). Its pathway is pyrimidine metabolism; UMP biosynthesis via de novo pathway; (S)-dihydroorotate from bicarbonate: step 2/3. In terms of biological role, catalyzes the condensation of carbamoyl phosphate and aspartate to form carbamoyl aspartate and inorganic phosphate, the committed step in the de novo pyrimidine nucleotide biosynthesis pathway. The protein is Aspartate carbamoyltransferase catalytic subunit of Rhodopseudomonas palustris (strain BisB18).